A 329-amino-acid chain; its full sequence is uncharacterized protein (329 aa).

The N-terminal stretch at 1-22 (MPLCNNFSGNLVVAVALFFAGA) is a signal peptide.

This is an uncharacterized protein from Arabidopsis thaliana (Mouse-ear cress).